Consider the following 508-residue polypeptide: Photosystem II CP47 reaction center protein (508 aa).

6 helical membrane passes run 21-36 (AVHIMHTALVAGWAGS), 101-115 (IVFSGLCFLSAIWHW), 140-156 (GIHLFLSGVACFGFGAF), 203-218 (IAAGLLGIIAGLFHLS), 237-252 (VLSSSIAAVFFAAFIV), and 457-472 (TFALLFFFGHIWHGAR).

The protein belongs to the PsbB/PsbC family. PsbB subfamily. PSII is composed of 1 copy each of membrane proteins PsbA, PsbB, PsbC, PsbD, PsbE, PsbF, PsbH, PsbI, PsbJ, PsbK, PsbL, PsbM, PsbT, PsbX, PsbY, PsbZ, Psb30/Ycf12, at least 3 peripheral proteins of the oxygen-evolving complex and a large number of cofactors. It forms dimeric complexes. The cofactor is Binds multiple chlorophylls. PSII binds additional chlorophylls, carotenoids and specific lipids..

Its subcellular location is the plastid. The protein resides in the chloroplast thylakoid membrane. Functionally, one of the components of the core complex of photosystem II (PSII). It binds chlorophyll and helps catalyze the primary light-induced photochemical processes of PSII. PSII is a light-driven water:plastoquinone oxidoreductase, using light energy to abstract electrons from H(2)O, generating O(2) and a proton gradient subsequently used for ATP formation. In Gnetum parvifolium (Small-leaved jointfir), this protein is Photosystem II CP47 reaction center protein.